The following is a 29-amino-acid chain: Brevinin-2Ed (29 aa).

An intrachain disulfide couples Cys23 to Cys29.

The protein belongs to the frog skin active peptide (FSAP) family. Brevinin subfamily. In terms of tissue distribution, expressed by the skin glands.

The protein resides in the secreted. Its function is as follows. Shows antibacterial activity against representative Gram-negative and Gram-positive bacterial species, and hemolytic activity. The protein is Brevinin-2Ed of Pelophylax lessonae (Pool frog).